We begin with the raw amino-acid sequence, 96 residues long: Ferredoxin (96 aa).

One can recognise a 2Fe-2S ferredoxin-type domain in the interval 4 to 94 (YKVKLLTPEG…DVVIETHKEE (91 aa)). [2Fe-2S] cluster contacts are provided by Cys40, Cys45, Cys48, and Cys78.

The protein belongs to the 2Fe2S plant-type ferredoxin family. It depends on [2Fe-2S] cluster as a cofactor.

It is found in the plastid. The protein localises to the chloroplast. Functionally, ferredoxins are iron-sulfur proteins that transfer electrons in a wide variety of metabolic reactions. In Panax ginseng (Korean ginseng), this protein is Ferredoxin.